We begin with the raw amino-acid sequence, 232 residues long: Ribose-5-phosphate isomerase A (232 aa).

Substrate contacts are provided by residues 31–34, 87–90, and 100–103; these read TGST, DGAD, and KGGG. Glutamate 109 functions as the Proton acceptor in the catalytic mechanism. Lysine 127 is a binding site for substrate.

Belongs to the ribose 5-phosphate isomerase family. As to quaternary structure, homodimer.

It carries out the reaction aldehydo-D-ribose 5-phosphate = D-ribulose 5-phosphate. The protein operates within carbohydrate degradation; pentose phosphate pathway; D-ribose 5-phosphate from D-ribulose 5-phosphate (non-oxidative stage): step 1/1. Catalyzes the reversible conversion of ribose-5-phosphate to ribulose 5-phosphate. In Bifidobacterium longum (strain NCC 2705), this protein is Ribose-5-phosphate isomerase A.